We begin with the raw amino-acid sequence, 176 residues long: ATP-dependent protease subunit HslV (176 aa).

Threonine 2 is a catalytic residue. Glycine 157, cysteine 160, and threonine 163 together coordinate Na(+).

The protein belongs to the peptidase T1B family. HslV subfamily. As to quaternary structure, a double ring-shaped homohexamer of HslV is capped on each side by a ring-shaped HslU homohexamer. The assembly of the HslU/HslV complex is dependent on binding of ATP.

It localises to the cytoplasm. It carries out the reaction ATP-dependent cleavage of peptide bonds with broad specificity.. Its activity is regulated as follows. Allosterically activated by HslU binding. Protease subunit of a proteasome-like degradation complex believed to be a general protein degrading machinery. The chain is ATP-dependent protease subunit HslV from Salmonella gallinarum (strain 287/91 / NCTC 13346).